The sequence spans 315 residues: Small ribosomal subunit protein uS2 (315 aa).

Residues 241–315 (AQHGEERRPG…QPAPGSDANR (75 aa)) form a disordered region. Residues 243-288 (HGEERRPGEEDRDAASERGQKDRRDRRDRRGGGRDRERREPREDRA) are compositionally biased toward basic and acidic residues.

It belongs to the universal ribosomal protein uS2 family.

The sequence is that of Small ribosomal subunit protein uS2 from Anaeromyxobacter sp. (strain Fw109-5).